The following is a 532-amino-acid chain: Probable galacturonosyltransferase 14 (532 aa).

The Cytoplasmic segment spans residues 1 to 40 (MQLHISPSMRSITISSSNEFIDLMKIKVAARHISYRTLFH). A helical; Signal-anchor for type II membrane protein membrane pass occupies residues 41 to 61 (TILILAFLLPFVFILTAVVTL). At 62-532 (EGVNKCSSID…DFIKNCHILE (471 aa)) the chain is on the lumenal side. N-linked (GlcNAc...) asparagine glycans are attached at residues N305, N395, N444, and N519.

This sequence belongs to the glycosyltransferase 8 family. As to expression, expressed in roots, inflorescences, siliques, leaves and stems. Accumulates in pollen grains.

Its subcellular location is the golgi apparatus membrane. It participates in glycan metabolism; pectin biosynthesis. Its function is as follows. May be involved in pectin and/or xylans biosynthesis in cell walls. Together with GAUT13, required for pollen tube growth, possibly through the regulation of pectin biosynthesis and repartition in the pollen tube wall. This chain is Probable galacturonosyltransferase 14, found in Arabidopsis thaliana (Mouse-ear cress).